A 418-amino-acid polypeptide reads, in one-letter code: S-adenosylmethionine synthase (418 aa).

ATP is bound at residue His16. Asp18 contributes to the Mg(2+) binding site. K(+) is bound at residue Glu44. L-methionine-binding residues include Glu57 and Gln100. The tract at residues 100–110 is flexible loop; sequence QSPDIAQGVDS. ATP contacts are provided by residues 174–176, Asp259, 265–266, Ala282, and Lys286; these read DGK and RK. Asp259 contributes to the L-methionine binding site. Lys290 lines the L-methionine pocket.

It belongs to the AdoMet synthase family. Homotetramer; dimer of dimers. Requires Mg(2+) as cofactor. K(+) is required as a cofactor.

Its subcellular location is the cytoplasm. It catalyses the reaction L-methionine + ATP + H2O = S-adenosyl-L-methionine + phosphate + diphosphate. Its pathway is amino-acid biosynthesis; S-adenosyl-L-methionine biosynthesis; S-adenosyl-L-methionine from L-methionine: step 1/1. In terms of biological role, catalyzes the formation of S-adenosylmethionine (AdoMet) from methionine and ATP. The overall synthetic reaction is composed of two sequential steps, AdoMet formation and the subsequent tripolyphosphate hydrolysis which occurs prior to release of AdoMet from the enzyme. The protein is S-adenosylmethionine synthase of Acaryochloris marina (strain MBIC 11017).